The chain runs to 496 residues: Glycerol kinase (496 aa).

T12 contacts ADP. T12, T13, and S14 together coordinate ATP. T12 contributes to the sn-glycerol 3-phosphate binding site. R16 is an ADP binding site. R82, E83, and Y134 together coordinate sn-glycerol 3-phosphate. The glycerol site is built by R82, E83, and Y134. H230 carries the post-translational modification Phosphohistidine; by HPr. D244 lines the sn-glycerol 3-phosphate pocket. 2 residues coordinate glycerol: D244 and Q245. T266 and G309 together coordinate ADP. Positions 266, 309, 313, and 410 each coordinate ATP. Residues G410 and N414 each coordinate ADP.

This sequence belongs to the FGGY kinase family. Homotetramer and homodimer (in equilibrium). Post-translationally, the phosphoenolpyruvate-dependent sugar phosphotransferase system (PTS), including enzyme I, and histidine-containing protein (HPr) are required for the phosphorylation, which leads to the activation of the enzyme.

It carries out the reaction glycerol + ATP = sn-glycerol 3-phosphate + ADP + H(+). The protein operates within polyol metabolism; glycerol degradation via glycerol kinase pathway; sn-glycerol 3-phosphate from glycerol: step 1/1. Activated by phosphorylation and inhibited by fructose 1,6-bisphosphate (FBP). Key enzyme in the regulation of glycerol uptake and metabolism. Catalyzes the phosphorylation of glycerol to yield sn-glycerol 3-phosphate. This is Glycerol kinase from Bacillus mycoides (strain KBAB4) (Bacillus weihenstephanensis).